Consider the following 268-residue polypeptide: Indole-3-glycerol phosphate synthase (268 aa).

It belongs to the TrpC family.

The catalysed reaction is 1-(2-carboxyphenylamino)-1-deoxy-D-ribulose 5-phosphate + H(+) = (1S,2R)-1-C-(indol-3-yl)glycerol 3-phosphate + CO2 + H2O. It participates in amino-acid biosynthesis; L-tryptophan biosynthesis; L-tryptophan from chorismate: step 4/5. In Acinetobacter baumannii (strain SDF), this protein is Indole-3-glycerol phosphate synthase.